The primary structure comprises 183 residues: MTATAQQLEYLKNSIQSIEDYPKPGILFRDVTSLLEDPKAYALSIELLTERYKDAGITKVVGTEARGFLFGAPVALALGVGFVPVRKPRKLPRETIAESYELEYGTDQLEIHVDAIKPGDKVLVVDDLLATGGTIDATVKLIRRLGGEVHDAAFIINLFDLGGEQRLEKLGIHCYSLVPFPGH.

This sequence belongs to the purine/pyrimidine phosphoribosyltransferase family. As to quaternary structure, homodimer.

The protein localises to the cytoplasm. It carries out the reaction AMP + diphosphate = 5-phospho-alpha-D-ribose 1-diphosphate + adenine. It functions in the pathway purine metabolism; AMP biosynthesis via salvage pathway; AMP from adenine: step 1/1. Catalyzes a salvage reaction resulting in the formation of AMP, that is energically less costly than de novo synthesis. This Klebsiella pneumoniae (strain 342) protein is Adenine phosphoribosyltransferase.